The chain runs to 488 residues: Serine/threonine-protein kinase 32C (488 aa).

Residues 1-56 (MRSGAERRGSSAAAPPSSPPPGRARPAGSDVSPALPPPAASQPRARDAGDARAQPR) form a disordered region. Residues Ser-10, Ser-17, and Ser-18 each carry the phosphoserine modification. The segment covering 24-33 (ARPAGSDVSP) has biased composition (low complexity). The region spanning 94–354 (FQILRAIGKG…LQDMQTAPSL (261 aa)) is the Protein kinase domain. Residues 100-108 (IGKGSFGKV) and Lys-123 each bind ATP. Asp-217 functions as the Proton acceptor in the catalytic mechanism. Residues 397–406 (HKKKKRLAKN) show a composition bias toward basic residues. Disordered regions lie at residues 397–420 (HKKKKRLAKNKSRDSSRDSSQSEN) and 443–488 (KRSQ…SGSS).

The protein belongs to the protein kinase superfamily. Ser/Thr protein kinase family. Mg(2+) serves as cofactor.

It carries out the reaction L-seryl-[protein] + ATP = O-phospho-L-seryl-[protein] + ADP + H(+). It catalyses the reaction L-threonyl-[protein] + ATP = O-phospho-L-threonyl-[protein] + ADP + H(+). This chain is Serine/threonine-protein kinase 32C, found in Mus musculus (Mouse).